We begin with the raw amino-acid sequence, 379 residues long: Tryptophan 2,3-dioxygenase (379 aa).

Substrate is bound by residues 57–61 (FIITH) and Arg-128. Residue His-312 coordinates heme. Position 327 (Thr-327) interacts with substrate.

It belongs to the tryptophan 2,3-dioxygenase family. As to quaternary structure, homotetramer. Dimer of dimers. Requires heme as cofactor.

It carries out the reaction L-tryptophan + O2 = N-formyl-L-kynurenine. The protein operates within amino-acid degradation; L-tryptophan degradation via kynurenine pathway; L-kynurenine from L-tryptophan: step 1/2. It participates in pigment biosynthesis; ommochrome biosynthesis. Its function is as follows. Heme-dependent dioxygenase that catalyzes the oxidative cleavage of the L-tryptophan (L-Trp) pyrrole ring and converts L-tryptophan to N-formyl-L-kynurenine. Catalyzes the oxidative cleavage of the indole moiety. The chain is Tryptophan 2,3-dioxygenase from Drosophila erecta (Fruit fly).